Consider the following 512-residue polypeptide: Ankyrin repeat domain-containing protein SOWAHC (512 aa).

Residues Ser-82 and Ser-125 each carry the phosphoserine modification. The disordered stretch occupies residues 126–248; it reads LGLGGEVSDQ…AEEESSVGAS (123 aa). Over residues 173 to 186 the composition is skewed to low complexity; it reads PPQGEAEGGSSPSG. Ser-205 is modified (phosphoserine). Residues 214–228 are compositionally biased toward gly residues; that stretch reads PGDGNAGGRSRGGGD. Residues 229-248 show a composition bias toward low complexity; the sequence is SDTASLASSSAEEESSVGAS. 2 ANK repeats span residues 288-317 and 327-357; these read TGFT…KHQL and GGYT…DVDI. At Arg-395 the chain carries Omega-N-methylarginine. Positions 427–500 are disordered; the sequence is HVPEGWTGGS…EERSLRGYSS (74 aa). Residues 453-462 show a composition bias toward basic residues; that stretch reads MKPRLNKIRF. The span at 481-492 shows a compositional bias: acidic residues; that stretch reads EEGEEEEEEEEE.

The protein belongs to the SOWAH family.

This Mus musculus (Mouse) protein is Ankyrin repeat domain-containing protein SOWAHC (Sowahc).